Consider the following 82-residue polypeptide: Envelope small membrane protein (82 aa).

The Virion surface segment spans residues 1 to 19 (MTFPRALTVIDDNGMVISI). A helical membrane pass occupies residues 20-40 (IFWLLLIIILILFSIALLNII). At 41 to 82 (KLCMVCCNLGRTVVVIPVRHAYDAYKNFMRINAYNHNEALLV) the chain is on the intravirion side.

The protein belongs to the alphacoronaviruses E protein family. In terms of assembly, homopentamer. Interacts with membrane protein M in the budding compartment of the host cell, which is located between endoplasmic reticulum and the Golgi complex. Interacts with Nucleoprotein.

It localises to the host Golgi apparatus membrane. Its function is as follows. Plays a central role in virus morphogenesis and assembly. Acts as a viroporin and self-assembles in host membranes forming pentameric protein-lipid pores that allow ion transport. Also plays a role in the induction of apoptosis. This Canine coronavirus (strain BGF10) (CCoV) protein is Envelope small membrane protein.